The chain runs to 455 residues: Exodeoxyribonuclease 7 large subunit (455 aa).

The protein belongs to the XseA family. In terms of assembly, heterooligomer composed of large and small subunits.

The protein localises to the cytoplasm. The catalysed reaction is Exonucleolytic cleavage in either 5'- to 3'- or 3'- to 5'-direction to yield nucleoside 5'-phosphates.. Functionally, bidirectionally degrades single-stranded DNA into large acid-insoluble oligonucleotides, which are then degraded further into small acid-soluble oligonucleotides. In Escherichia fergusonii (strain ATCC 35469 / DSM 13698 / CCUG 18766 / IAM 14443 / JCM 21226 / LMG 7866 / NBRC 102419 / NCTC 12128 / CDC 0568-73), this protein is Exodeoxyribonuclease 7 large subunit.